A 209-amino-acid polypeptide reads, in one-letter code: Molybdenum cofactor guanylyltransferase (209 aa).

Residues 16–18 (LAG), Lys28, Asn56, Asp69, and Asp103 each bind GTP. Residue Asp103 participates in Mg(2+) binding.

This sequence belongs to the MobA family. In terms of assembly, monomer. Mg(2+) serves as cofactor.

It localises to the cytoplasm. It catalyses the reaction Mo-molybdopterin + GTP + H(+) = Mo-molybdopterin guanine dinucleotide + diphosphate. Transfers a GMP moiety from GTP to Mo-molybdopterin (Mo-MPT) cofactor (Moco or molybdenum cofactor) to form Mo-molybdopterin guanine dinucleotide (Mo-MGD) cofactor. The sequence is that of Molybdenum cofactor guanylyltransferase from Rhizobium leguminosarum bv. trifolii (strain WSM2304).